The sequence spans 1246 residues: Putative helicase L115 (1246 aa).

Positions 1-21 (MSKTITKKVNKKTKKSTKINP) are disordered. The Helicase ATP-binding domain occupies 872-1030 (AKFTDGYHGF…YYMLKMLQTG (159 aa)). 885–892 (SDVGSGKT) is an ATP binding site.

The chain is Putative helicase L115 from Acanthamoeba polyphaga (Amoeba).